Here is a 341-residue protein sequence, read N- to C-terminus: Phosphoribosylformylglycinamidine cyclo-ligase (341 aa).

It belongs to the AIR synthase family.

It is found in the cytoplasm. It catalyses the reaction 2-formamido-N(1)-(5-O-phospho-beta-D-ribosyl)acetamidine + ATP = 5-amino-1-(5-phospho-beta-D-ribosyl)imidazole + ADP + phosphate + H(+). The protein operates within purine metabolism; IMP biosynthesis via de novo pathway; 5-amino-1-(5-phospho-D-ribosyl)imidazole from N(2)-formyl-N(1)-(5-phospho-D-ribosyl)glycinamide: step 2/2. The protein is Phosphoribosylformylglycinamidine cyclo-ligase of Thermosynechococcus vestitus (strain NIES-2133 / IAM M-273 / BP-1).